The primary structure comprises 614 residues: Deoxynucleoside triphosphate triphosphohydrolase SAMHD1 (614 aa).

Positions 1–13 (MGSPAAGWGAAPA) are enriched in low complexity. Residues 1–33 (MGSPAAGWGAAPAKRARREGSAESSCGSPADRD) are disordered. Positions 37-102 (WDTERLCQHL…LACLNQLRQT (66 aa)) constitute an SAM domain. Residues Lys-107 and Val-108 each coordinate GTP. Asn-110 contacts dGTP. GTP-binding residues include Asp-128, Gln-133, and Arg-136. DGTP is bound by residues Gln-140, Leu-141, Val-147, and Arg-155. Position 140 (Gln-140) interacts with dATP. Gln-140 is a binding site for dCTP. Residue Gln-140 coordinates dTTP. Arg-155 is a dATP binding site. Arg-155 is a dCTP binding site. Residue Arg-155 coordinates dTTP. Positions 155–307 (RFEHSLGVGY…GIDVDKWDYF (153 aa)) constitute an HD domain. Residues His-158, His-197, and Asp-198 each contribute to the Mn(2+) site. DATP-binding residues include His-201 and His-206. Residues His-201 and His-206 each coordinate dCTP. The dTTP site is built by His-201 and His-206. His-224 is an active-site residue. Position 302 (Asp-302) interacts with Mn(2+). DGTP contacts are provided by Lys-303, Tyr-306, Asp-310, Arg-324, Arg-343, Lys-345, Asn-349, Arg-357, Tyr-365, Gln-366, His-367, and Lys-368. 3 residues coordinate dATP: Lys-303, Tyr-306, and Asp-310. DCTP-binding residues include Lys-303, Tyr-306, and Asp-310. Positions 303, 306, and 310 each coordinate dTTP. Arg-357 provides a ligand contact to dATP. DCTP is bound at residue Arg-357. Gln-366 contacts dATP. A dCTP-binding site is contributed by Gln-366. Gln-366 is a binding site for dTTP. Residues Arg-442, Lys-446, and Lys-515 each contribute to the GTP site. Lys-515 is a dGTP binding site.

It belongs to the SAMHD1 family. In terms of assembly, homodimer; in absence of GTP and dNTP. Homotetramer; in GTP- and dNTP-bound form. Interacts with rbbp8/CtIP. Zn(2+) serves as cofactor.

It localises to the nucleus. The protein localises to the chromosome. The catalysed reaction is a 2'-deoxyribonucleoside 5'-triphosphate + H2O = a 2'-deoxyribonucleoside + triphosphate + H(+). It carries out the reaction dATP + H2O = 2'-deoxyadenosine + triphosphate + H(+). It catalyses the reaction dCTP + H2O = 2'-deoxycytidine + triphosphate + H(+). The enzyme catalyses dGTP + H2O = 2'-deoxyguanosine + triphosphate + H(+). The catalysed reaction is dTTP + H2O = thymidine + triphosphate + H(+). Allosterically activated and regulated via the combined actions of GTP and dNTPs (dATP, dGTP, dTTP and dCTP): Allosteric site 1 binds GTP, while allosteric site 2 binds dNTP. Allosteric activation promotes the formation of highly active homotetramers. Its function is as follows. Protein that acts both as a host restriction factor involved in defense response to virus and as a regulator of DNA end resection at stalled replication forks. Has deoxynucleoside triphosphate (dNTPase) activity, which is required to restrict infection by viruses: dNTPase activity reduces cellular dNTP levels to levels too low for retroviral reverse transcription to occur, blocking early-stage virus replication in dendritic and other myeloid cells. Functions during S phase at stalled DNA replication forks to promote the resection of gapped or reversed forks: acts by stimulating the exonuclease activity of MRE11, activating the ATR-CHK1 pathway and allowing the forks to restart replication. Its ability to promote degradation of nascent DNA at stalled replication forks is required to prevent induction of type I interferons, thereby preventing chronic inflammation. Ability to promote DNA end resection at stalled replication forks is independent of dNTPase activity. This chain is Deoxynucleoside triphosphate triphosphohydrolase SAMHD1, found in Gallus gallus (Chicken).